The following is a 315-amino-acid chain: Acetyl-coenzyme A carboxylase carboxyl transferase subunit alpha (315 aa).

A CoA carboxyltransferase C-terminal domain is found at 32 to 289 (EIDMLEASLE…KEAFTKQLSE (258 aa)).

The protein belongs to the AccA family. In terms of assembly, acetyl-CoA carboxylase is a heterohexamer composed of biotin carboxyl carrier protein (AccB), biotin carboxylase (AccC) and two subunits each of ACCase subunit alpha (AccA) and ACCase subunit beta (AccD).

The protein resides in the cytoplasm. It carries out the reaction N(6)-carboxybiotinyl-L-lysyl-[protein] + acetyl-CoA = N(6)-biotinyl-L-lysyl-[protein] + malonyl-CoA. The protein operates within lipid metabolism; malonyl-CoA biosynthesis; malonyl-CoA from acetyl-CoA: step 1/1. Its function is as follows. Component of the acetyl coenzyme A carboxylase (ACC) complex. First, biotin carboxylase catalyzes the carboxylation of biotin on its carrier protein (BCCP) and then the CO(2) group is transferred by the carboxyltransferase to acetyl-CoA to form malonyl-CoA. The sequence is that of Acetyl-coenzyme A carboxylase carboxyl transferase subunit alpha from Staphylococcus carnosus (strain TM300).